The following is a 303-amino-acid chain: Nod factor export ATP-binding protein I (303 aa).

Residues 5–235 (LQMRNVRKLY…EIGCDVVEVY (231 aa)) enclose the ABC transporter domain. 37 to 44 (GPNGAGKT) serves as a coordination point for ATP.

The protein belongs to the ABC transporter superfamily. Lipooligosaccharide exporter (TC 3.A.1.102) family. In terms of assembly, the complex is composed of two ATP-binding proteins (NodI) and two transmembrane proteins (NodJ).

It localises to the cell inner membrane. Part of the ABC transporter complex NodIJ involved in the export of the nodulation factors (Nod factors), the bacterial signal molecules that induce symbiosis and subsequent nodulation induction. Nod factors are LCO (lipo-chitin oligosaccharide), a modified beta-1,4-linked N-acetylglucosamine oligosaccharide. This subunit is responsible for energy coupling to the transport system. The chain is Nod factor export ATP-binding protein I from Cupriavidus metallidurans (strain ATCC 43123 / DSM 2839 / NBRC 102507 / CH34) (Ralstonia metallidurans).